Reading from the N-terminus, the 1263-residue chain is Kinesin-like protein KIN-12E (1263 aa).

The disordered stretch occupies residues 21 to 44 (PAPSESLRSVPCTPEANTVSRDNH). Residues 35–44 (EANTVSRDNH) show a composition bias toward polar residues. Residues 93 to 430 (NVQVIIRTRP…LKFAQRAKLI (338 aa)) enclose the Kinesin motor domain. 174 to 181 (GQTGSGKT) contributes to the ATP binding site. Coiled-coil stretches lie at residues 679 to 737 (SKKL…KIRS), 764 to 805 (AEAH…AEEN), 831 to 881 (ALEV…KRLL), 905 to 966 (SEKS…HQSE), 1091 to 1168 (TDLL…TIQE), and 1193 to 1251 (LRKE…VLSL).

This sequence belongs to the TRAFAC class myosin-kinesin ATPase superfamily. Kinesin family. KIN-12 subfamily.

The chain is Kinesin-like protein KIN-12E from Arabidopsis thaliana (Mouse-ear cress).